Reading from the N-terminus, the 1483-residue chain is Heme-responsive zinc finger transcription factor HAP1 (1483 aa).

The span at 1–50 shows a compositional bias: polar residues; it reads MSNTPYNSSVPSIASMTQSSVSRSPNMHTATTPGANTSSNSPPLHMSSDS. Positions 1 to 56 are disordered; that stretch reads MSNTPYNSSVPSIASMTQSSVSRSPNMHTATTPGANTSSNSPPLHMSSDSSKIKRK. Zn(2+) contacts are provided by cysteine 64, cysteine 67, cysteine 74, cysteine 81, cysteine 84, and cysteine 93. Residues 64-93 constitute a DNA-binding region (zn(2)-C6 fungal-type); that stretch reads CTICRKRKVKCDKLRPHCQQCTKTGVAHLC. Residues 105–134 are a coiled coil; the sequence is EKELLKDNELKKLRERVKSLEKTLSKVHSS. The disordered stretch occupies residues 126–208; it reads KTLSKVHSSP…ANSSSLSISN (83 aa). Over residues 130–142 the composition is skewed to low complexity; sequence KVHSSPSSNSLKS. Polar residues-rich tracts occupy residues 143 to 152 and 160 to 176; these read YNTPESSNLF and TLVNANTGSASSASHMH. Positions 177-208 are enriched in low complexity; that stretch reads QQQQQQQQQEQQQDFSRSANANANSSSLSISN. The segment at 244–444 is heme-responsive; required for HMC formation; it reads KGDPYLKLLW…NTIPHHQPQS (201 aa). HRM repeat units follow at residues 280–285, 299–304, 323–328, 347–352, 389–394, and 415–420; these read KCPINH, KCPVDH, RCPVDH, and RCPIDH. Polar residues-rich tracts occupy residues 432 to 447 and 706 to 734; these read STHNTIPHHQPQSGSH and QLNATIPATSQDVSNNGSKKANPSTNPTL. Disordered regions lie at residues 432-458 and 706-767; these read STHNTIPHHQPQSGSHARSHPAQSRKH and QLNA…KENQ. Residues 735-759 are compositionally biased toward low complexity; the sequence is NNNMSAATTNSSSRSGSADSRSGSN. The stretch at 1192–1197 is one HRM 7 repeat; the sequence is KCPVYQ. The disordered stretch occupies residues 1384 to 1411; that stretch reads TANTDTSANGSALSTLTSPQGSDLASNS. The segment covering 1388–1411 has biased composition (polar residues); the sequence is DTSANGSALSTLTSPQGSDLASNS.

Binds DNA as a homodimer. Interacts with SRO9 and YDJ1. In the absence of heme, binds to at least four cellular proteins, including YDJ1 and SRO9, forming a high-molecular-weight complex (HMC) which results in repression of its activity and dictates its DNA-binding specificity.

The protein localises to the nucleus. Its function is as follows. Regulation of oxygen dependent gene expression. It modulates the expression of Iso-1 (CYP1) and Iso-2 (CYP3) cytochrome c. In response to heme, promotes transcription of genes encoding functions required for respiration, controlling oxidative damage and repression of anaerobic genes. Binds to the sequence 5'-CGGNNNTNNCGG-3'. Is non-functional in terms of iso-1 cytochrome c expression in strain S288c and its derivatives. In Saccharomyces cerevisiae (Baker's yeast), this protein is Heme-responsive zinc finger transcription factor HAP1 (HAP1).